A 480-amino-acid chain; its full sequence is Glutamyl-tRNA(Gln) amidotransferase subunit A (480 aa).

Active-site charge relay system residues include lysine 79 and serine 154. A disordered region spans residues 133-156 (NENSAYGPVRNPRDKSRVPGGSSG). Serine 178 (acyl-ester intermediate) is an active-site residue.

It belongs to the amidase family. GatA subfamily. As to quaternary structure, heterotrimer of A, B and C subunits.

The catalysed reaction is L-glutamyl-tRNA(Gln) + L-glutamine + ATP + H2O = L-glutaminyl-tRNA(Gln) + L-glutamate + ADP + phosphate + H(+). Its function is as follows. Allows the formation of correctly charged Gln-tRNA(Gln) through the transamidation of misacylated Glu-tRNA(Gln) in organisms which lack glutaminyl-tRNA synthetase. The reaction takes place in the presence of glutamine and ATP through an activated gamma-phospho-Glu-tRNA(Gln). This is Glutamyl-tRNA(Gln) amidotransferase subunit A from Koribacter versatilis (strain Ellin345).